We begin with the raw amino-acid sequence, 423 residues long: Dihydroorotase (423 aa).

Residues His56 and His58 each contribute to the Zn(2+) site. Residues 58–60 and Asn89 each bind substrate; that span reads HFR. Lys137, His168, His227, and Asp302 together coordinate Zn(2+). N6-carboxylysine is present on Lys137. Residue Asp302 is part of the active site. His306 contributes to the substrate binding site.

The protein belongs to the metallo-dependent hydrolases superfamily. DHOase family. Class I DHOase subfamily. Requires Zn(2+) as cofactor.

It carries out the reaction (S)-dihydroorotate + H2O = N-carbamoyl-L-aspartate + H(+). It functions in the pathway pyrimidine metabolism; UMP biosynthesis via de novo pathway; (S)-dihydroorotate from bicarbonate: step 3/3. Its function is as follows. Catalyzes the reversible cyclization of carbamoyl aspartate to dihydroorotate. The chain is Dihydroorotase from Methanocaldococcus jannaschii (strain ATCC 43067 / DSM 2661 / JAL-1 / JCM 10045 / NBRC 100440) (Methanococcus jannaschii).